Here is a 551-residue protein sequence, read N- to C-terminus: Nose resistant to fluoxetine protein 5 (551 aa).

The first 20 residues, 1-20 (MSRNFHIFFLLVSIIQVGNS), serve as a signal peptide directing secretion. Cysteine 151 and cysteine 232 are disulfide-bonded. Positions 241–265 (EDSEQEEGNVETTVAPTPDDDNSTL) are disordered.

The protein belongs to the BPI/LBP/Plunc superfamily. BPI/LBP family. Interacts with ttr-52. In terms of tissue distribution, expressed in the body wall muscle cells and detected at the basal surface of pharyngeal cells and basal-lateral membranes of the intestine.

The protein localises to the secreted. Its function is as follows. Plays a role in the uptake of a range of molecules including phosphatidylserine, lipids and xenobiotic compounds from the intestine to surrounding tissues. Possesses lipid transfer activity. Mediates transport of lipids from intestine to reproductive tract. Binds phosphatidylserine. Plays a role in efficient clearance of cell corpses by mediating phosphatidylserine appearance on phagocytic cells, thus promoting phagocytic engulfment of apoptotic cells. Vital for embryonic development. The protein is Nose resistant to fluoxetine protein 5 of Caenorhabditis elegans.